Here is a 352-residue protein sequence, read N- to C-terminus: Protein SIS1 (352 aa).

Residues 4–70 enclose the J domain; the sequence is ETKLYDLLGV…REIYDQYGLE (67 aa). Serine 275 is modified (phosphoserine). Residues 300–325 are disordered; it reads VQPVQPSQTSTYPGQGMPTPKNPSQR. Polar residues predominate over residues 301–312; that stretch reads QPVQPSQTSTYP.

Interacts with polyadenylate-binding protein PAB1.

It is found in the cytoplasm. Its subcellular location is the nucleus. Required for nuclear migration during mitosis. It is required for the normal initiation of translation. Might mediate the dissociation of a specific protein complex of the translation machinery. Essential for viability. This chain is Protein SIS1 (SIS1), found in Saccharomyces cerevisiae (strain ATCC 204508 / S288c) (Baker's yeast).